The primary structure comprises 288 residues: tRNA pseudouridine synthase A (288 aa).

Aspartate 59 functions as the Nucleophile in the catalytic mechanism. Residue tyrosine 134 coordinates substrate.

The protein belongs to the tRNA pseudouridine synthase TruA family. Homodimer.

The enzyme catalyses uridine(38/39/40) in tRNA = pseudouridine(38/39/40) in tRNA. Formation of pseudouridine at positions 38, 39 and 40 in the anticodon stem and loop of transfer RNAs. The sequence is that of tRNA pseudouridine synthase A from Leifsonia xyli subsp. xyli (strain CTCB07).